Here is a 503-residue protein sequence, read N- to C-terminus: MTLREVSVATDLSDFYDLLVIGAGPAGMAAAVEASASGARVAVLDENPRPGGQIYREITRNSPDRRTYLGPDYWKGQPLAEAFCLSNVDYASRATVWSLETRDKTAGQARNVVGVTVAGSARMVETNAVVLATGAQERPMPVPGWTLPGVMTAGAAQIALKAAGAMPAGPVVLIGCGPLLYLLASQLVDAGVPDLTVLDTAQSPFRGAVLRHMPEFLLSPYVLKGIGLLLKVRRHAQVVYGVRSIAIIGSQHAESVRYAVGQGERSIPAKSVLLHQGVIPSTSLSNAAGCELQWNDEQRAFQPVTDHDGRTTKAGIYVAGDGAGIAGAQAAEVSGRLAALAALADLKLVSTQTSSTSIKSRHAQARRFLRGRAFLDALYTPRQSFLAPSAPETIVCRCEEITVRKLREAIALGPPGPNQLKTFVRCGMGQCQGRLCAATVTEIMVAEERKVSPADVGTYRLRSPVKPVRLAELAHLPHTARALKAVTGRDPVDHDTTETGHIL.

This sequence to T-protein and to dimethylglycine dehydrogenase. In terms of assembly, heterodimer of a subunit A and a subunit B.

It participates in opine metabolism; octopine degradation. Oxidative cleavage of octopine into L-arginine and pyruvate. The sequence is that of Opine oxidase subunit A (ooxA) from Agrobacterium tumefaciens (strain Ach5).